Consider the following 568-residue polypeptide: Natural resistance-associated macrophage protein 2 (568 aa).

Over residues 1–20 the composition is skewed to basic and acidic residues; that stretch reads MVLDPEEKIPDDGASGDHGD. Positions 1 to 45 are disordered; that stretch reads MVLDPEEKIPDDGASGDHGDSASLGAINPAYSNSSLPHSTGDSEE. Over 1–69 the chain is Cytoplasmic; that stretch reads MVLDPEEKIP…EEYSCFSFRK (69 aa). Residues 30–40 show a composition bias toward polar residues; it reads AYSNSSLPHST. A helical transmembrane segment spans residues 70 to 90; that stretch reads LWAFTGPGFLMSIAYLDPGNI. At 91-95 the chain is on the extracellular side; the sequence is ESDLQ. Residues 96–117 form a helical membrane-spanning segment; it reads SGAVAGFKLLWVLLLATIVGLL. Residues 118–154 lie on the Cytoplasmic side of the membrane; the sequence is LQRLAARLGVVTGLHLAEVCHRQYPKVPRIILWLMVE. Residues 155 to 175 form a helical membrane-spanning segment; that stretch reads LAIIGSDMQEVIGSAIAINLL. At 176–179 the chain is on the extracellular side; sequence SAGR. Residues 180–194 traverse the membrane as a helical segment; the sequence is VPLYGGVLITIADTF. Over 195 to 208 the chain is Cytoplasmic; that stretch reads VFLFLDKYGLRKLE. Residues 209–229 form a helical membrane-spanning segment; it reads AFFGFLITIMALTFGYEYVTV. At 230 to 255 the chain is on the extracellular side; the sequence is KPSQSQVLRGMFVPSCSGCHTPQVEQ. A helical membrane pass occupies residues 256-276; that stretch reads AVGIVGAVIMPHNMYLHSALV. Over 277 to 301 the chain is Cytoplasmic; that stretch reads KSRQVNRANKQEVREANKYFFIESC. The helical transmembrane segment at 302-322 threads the bilayer; that stretch reads IALFVSFIINVFVVSVFAEAF. Topologically, residues 323 to 360 are extracellular; it reads FEKTNEQVVEVCRNSSSPHADLFPNDNSTLAVDIYKGG. Residues N336 and N349 are each glycosylated (N-linked (GlcNAc...) asparagine). A helical transmembrane segment spans residues 361–381; that stretch reads VVLGCYFGPAALYIWAVGILA. Over 382 to 408 the chain is Cytoplasmic; that stretch reads AGQSSTMTGTYSGQFVMEGFLNLKWSR. The chain crosses the membrane as a helical span at residues 409 to 429; it reads FARVILTRSIAIIPTLLVAVF. The Extracellular portion of the chain corresponds to 430-440; the sequence is QDVEHLTGMND. Residues 441–461 form a helical membrane-spanning segment; that stretch reads FLNVLQSLQLPFALIPILTFT. At 462 to 482 the chain is on the cytoplasmic side; the sequence is SLRPVMSEFSNGIGWRIAGGI. Residues 483 to 503 form a helical membrane-spanning segment; the sequence is LVLLVCSINMYFVVVYVQELG. Topologically, residues 504–506 are extracellular; it reads HVA. The chain crosses the membrane as a helical span at residues 507–527; sequence LYVVAAVVSVAYLGFVFYLGW. Residues 528 to 568 lie on the Cytoplasmic side of the membrane; sequence QCLIALGLSFLDCGRSYHLGLTARPEIYLLNTVDAVSLVSR. The required for early endosome targeting stretch occupies residues 555–559; the sequence is YLLNT. L556, S564, and S567 each carry phosphoserine.

The protein belongs to the NRAMP family. As to quaternary structure, forms a complex with NDFIP1 and NEDD4L, in cortical neurons, in response to iron and cobalt exposure; this interaction leads to SLC11A2 ubiquitination by NEDD4L and proteasome-dependent degradation. Interacts with NDFIP1, NDFIP2 and WWP2; this interaction leads to SLC11A2 ubiquitination by WWP2 and subsequent proteasome-dependent degradation. Interacts with COX2 and TOM6 at the outer mitochondrion membrane. Interacts with ARRDC1; this interaction regulates the incorporation of SLC11A2 into extracellular vesicles through an ubiquitination-dependent mechanism. Interacts with ARRDC4; controls the incorporation of SLC11A2 into extracellular vesicles through an ubiquitination-dependent mechanism. Ubiquitinated by WWP2. In terms of processing, N-glycosylated. As to expression, ubiquitous. In terms of tissue distribution, expressed in proximal intestine, kidney and brain.

It is found in the golgi apparatus. The protein localises to the trans-Golgi network membrane. It localises to the early endosome membrane. Its subcellular location is the recycling endosome membrane. The protein resides in the late endosome membrane. It is found in the lysosome membrane. The protein localises to the apical cell membrane. It localises to the mitochondrion outer membrane. Its subcellular location is the extracellular vesicle membrane. The catalysed reaction is Fe(2+)(in) + H(+)(in) = Fe(2+)(out) + H(+)(out). It carries out the reaction Cd(2+)(out) + H(+)(out) = Cd(2+)(in) + H(+)(in). The enzyme catalyses Co(2+)(out) + H(+)(out) = Co(2+)(in) + H(+)(in). It catalyses the reaction Mn(2+)(in) + H(+)(in) = Mn(2+)(out) + H(+)(out). The catalysed reaction is Zn(2+)(out) + H(+)(out) = Zn(2+)(in) + H(+)(in). It carries out the reaction Ni(2+)(out) + H(+)(out) = Ni(2+)(in) + H(+)(in). The enzyme catalyses H(+)(in) = H(+)(out). It catalyses the reaction Fe(2+)(in) = Fe(2+)(out). Inhibited by 2-(3-carbamimidoylsulfanylmethyl-benzyl)-isothiourea. Functionally, proton-coupled metal ion symporter operating with a proton to metal ion stoichiometry of 1:1. Selectively transports various divalent metal cations, in decreasing affinity: Cd(2+) &gt; Fe(2+) &gt; Co(2+), Mn(2+) &gt;&gt; Zn(2+), Ni(2+), VO(2+). Essential for maintenance of iron homeostasis by modulating intestinal absorption of dietary Fe(2+) and TF-associated endosomal Fe(2+) transport in erythroid precursors and other cells. Enables Fe(2+) and Mn(2+) ion entry into mitochondria, and is thus expected to promote mitochondrial heme synthesis, iron-sulfur cluster biogenesis and antioxidant defense. Can mediate uncoupled fluxes of either protons or metal ions. This Rattus norvegicus (Rat) protein is Natural resistance-associated macrophage protein 2 (Slc11a2).